The following is a 770-amino-acid chain: Cyclopiane-type diterpene synthase (770 aa).

The segment at 5–335 (ITDEYAVGID…VPRYCKVDRN (331 aa)) is terpene cyclase. Residues Asp-97 and Asp-101 each coordinate Mg(2+). Substrate contacts are provided by residues Asp-97, Asp-101, 190–193 (RIVD), Asn-234, 238–242 (SWDKE), and 328–329 (RY). Positions 97 to 101 (DDETD) match the DDXXD 1 motif. The short motif at 234–242 (NDLFSWDKE) is the NSE/DTE element. Positions 336–720 (PYKDHLEKYG…WALRLLIMKL (385 aa)) are prenyltransferase. Residues 371-397 (NQLKEPSSSTYKTHFSPLEPNPGPEQT) form a disordered region. Over residues 374–383 (KEPSSSTYKT) the composition is skewed to polar residues. Isopentenyl diphosphate-binding residues include Lys-423, Arg-426, and His-455. Residues Asp-462 and Asp-466 each contribute to the Mg(2+) site. Positions 462–466 (DDIQD) match the DDXXD 2 motif. Arg-471 provides a ligand contact to dimethylallyl diphosphate. Arg-472 serves as a coordination point for isopentenyl diphosphate. The dimethylallyl diphosphate site is built by Lys-548, Thr-549, Gln-584, Asn-591, Lys-620, and Lys-630.

This sequence in the N-terminal section; belongs to the terpene synthase family. In the C-terminal section; belongs to the FPP/GGPP synthase family. In terms of assembly, hexamer. Mg(2+) is required as a cofactor.

The enzyme catalyses isopentenyl diphosphate + (2E,6E)-farnesyl diphosphate = (2E,6E,10E)-geranylgeranyl diphosphate + diphosphate. It carries out the reaction (2E,6E,10E)-geranylgeranyl diphosphate + H2O = (+)-penichrysol + diphosphate. The protein operates within secondary metabolite biosynthesis; terpenoid biosynthesis. Its function is as follows. Bifunctional terpene synthase converts dimethylallyl diphosphate (DMAPP) and isopentenyl diphosphate (IPP) into a cyclopiane-type diterpene. The C-terminal prenyltransferase (PT) domain of PcCS catalyzes formation of geranylgeranyl pyrophosphate (GGPP), whereas the N-terminal terpene cyclase (TC) domain catalyzes the cyclization of GGPP to the cyclopiane-type diterpene penichrysol. The polypeptide is Cyclopiane-type diterpene synthase (Penicillium chrysogenum (Penicillium notatum)).